The following is an 86-amino-acid chain: Tryptophan-containing weak neurotoxin (86 aa).

The signal sequence occupies residues 1–21; sequence MKTLLLTLVVVTIVCLDLGYT. 5 disulfide bridges follow: Cys24–Cys45, Cys27–Cys32, Cys38–Cys63, Cys67–Cys78, and Cys79–Cys84.

This sequence belongs to the three-finger toxin family. Ancestral subfamily. Orphan group II sub-subfamily. As to quaternary structure, monomer in solution. Post-translationally, the disulfide bond Cys-27-Cys-32 is probably not needed for efficient interaction of the toxin with the target receptor (Torpedo muscle or alpha-7/CHRNA7 nAChR). In terms of tissue distribution, expressed by the venom gland.

The protein localises to the secreted. Neurotoxin that irreversibly inhibits nicotinic acetylcholine receptors (nAChR) and allosterically interacts with muscarinic acetylcholine receptors (mAChR). The loop II is involved in the interaction of this toxin with nAChR and mAChR. On nAChR, it acts as a competitive antagonist (muscle-type and alpha-7/CHRNA7) with IC(50) values in the micromolar range. On mAChR, in presence of ACh, it partially inhibits the effect of acetylcholine (ACh) (allosteric antagonist), whereas in the absence of ACh, it activates the receptor (allosteric agonist). It also shows a very weak inhibition of GABA(A) receptor composed of alpha-1-beta-3-gamma-2 (GABRA1 and GABRB3 and GABRG2) subunits (10 uM inhibit 31% current). In vivo, is nonlethal to mice at concentrations up to 20 mg/kg, but exerts a myorelaxant effect, induces a dose-dependent decrease in blood pressure and an increase in heart rate in mice and rats. The chain is Tryptophan-containing weak neurotoxin from Naja kaouthia (Monocled cobra).